The chain runs to 513 residues: Probable DNA ligase (513 aa).

Glu213 provides a ligand contact to ATP. Residue Lys215 is the N6-AMP-lysine intermediate of the active site. 6 residues coordinate ATP: Arg220, Arg235, Glu264, Phe304, Arg376, and Lys382.

The protein belongs to the ATP-dependent DNA ligase family. Requires Mg(2+) as cofactor.

It catalyses the reaction ATP + (deoxyribonucleotide)n-3'-hydroxyl + 5'-phospho-(deoxyribonucleotide)m = (deoxyribonucleotide)n+m + AMP + diphosphate.. Its function is as follows. DNA ligase that seals nicks in double-stranded DNA during DNA replication, DNA recombination and DNA repair. The chain is Probable DNA ligase from Anaeromyxobacter dehalogenans (strain 2CP-1 / ATCC BAA-258).